A 542-amino-acid chain; its full sequence is Peptide chain release factor 3 (542 aa).

The 270-residue stretch at 14 to 283 (DKRRNFAIIS…AFLEYALKPG (270 aa)) folds into the tr-type G domain. GTP is bound by residues 23–30 (SHPDAGKT), 91–95 (DTPGH), and 145–148 (NKMD).

This sequence belongs to the TRAFAC class translation factor GTPase superfamily. Classic translation factor GTPase family. PrfC subfamily.

Its subcellular location is the cytoplasm. Functionally, increases the formation of ribosomal termination complexes and stimulates activities of RF-1 and RF-2. It binds guanine nucleotides and has strong preference for UGA stop codons. It may interact directly with the ribosome. The stimulation of RF-1 and RF-2 is significantly reduced by GTP and GDP, but not by GMP. The protein is Peptide chain release factor 3 of Trichodesmium erythraeum (strain IMS101).